Consider the following 376-residue polypeptide: Alanine racemase (376 aa).

Lysine 40 acts as the Proton acceptor; specific for D-alanine in catalysis. The residue at position 40 (lysine 40) is an N6-(pyridoxal phosphate)lysine. Arginine 138 contacts substrate. Catalysis depends on tyrosine 270, which acts as the Proton acceptor; specific for L-alanine. Methionine 317 is a substrate binding site.

It belongs to the alanine racemase family. Requires pyridoxal 5'-phosphate as cofactor.

It carries out the reaction L-alanine = D-alanine. Its pathway is amino-acid biosynthesis; D-alanine biosynthesis; D-alanine from L-alanine: step 1/1. In terms of biological role, catalyzes the interconversion of L-alanine and D-alanine. May also act on other amino acids. The protein is Alanine racemase (alr) of Lactobacillus acidophilus (strain ATCC 700396 / NCK56 / N2 / NCFM).